Here is a 561-residue protein sequence, read N- to C-terminus: DNA ligase B (561 aa).

The active-site N6-AMP-lysine intermediate is the Lys125.

It belongs to the NAD-dependent DNA ligase family. LigB subfamily.

It carries out the reaction NAD(+) + (deoxyribonucleotide)n-3'-hydroxyl + 5'-phospho-(deoxyribonucleotide)m = (deoxyribonucleotide)n+m + AMP + beta-nicotinamide D-nucleotide.. In terms of biological role, catalyzes the formation of phosphodiester linkages between 5'-phosphoryl and 3'-hydroxyl groups in double-stranded DNA using NAD as a coenzyme and as the energy source for the reaction. The protein is DNA ligase B of Salmonella dublin (strain CT_02021853).